A 415-amino-acid chain; its full sequence is Levansucrase (415 aa).

Sucrose-binding residues include Trp-45, Asp-46, Ala-132, Arg-202, and Asp-203. The active-site Nucleophile is Asp-46. The Proton donor/acceptor role is filled by Glu-287.

Belongs to the glycosyl hydrolase 68 family.

It catalyses the reaction [6)-beta-D-fructofuranosyl-(2-&gt;](n) alpha-D-glucopyranoside + sucrose = [6)-beta-D-fructofuranosyl-(2-&gt;](n+1) alpha-D-glucopyranoside + D-glucose. In terms of biological role, catalyzes the synthesis of levan, a fructose polymer, by transferring the fructosyl moiety from sucrose to a growing acceptor molecule. The protein is Levansucrase of Rahnella aquatilis (strain ATCC 33071 / DSM 4594 / JCM 1683 / NBRC 105701 / NCIMB 13365 / CIP 78.65).